A 181-amino-acid chain; its full sequence is Dual-action ribosomal maturation protein DarP (181 aa).

Residues 1-23 (MTGIKKPMSQYQDDNELEDWGPS) form a disordered region.

This sequence belongs to the DarP family.

The protein localises to the cytoplasm. Its function is as follows. Member of a network of 50S ribosomal subunit biogenesis factors which assembles along the 30S-50S interface, preventing incorrect 23S rRNA structures from forming. Promotes peptidyl transferase center (PTC) maturation. The polypeptide is Dual-action ribosomal maturation protein DarP (Aeromonas salmonicida (strain A449)).